A 486-amino-acid chain; its full sequence is N-succinylglutamate 5-semialdehyde dehydrogenase (486 aa).

220-225 (GSSRTG) contributes to the NAD(+) binding site. Active-site residues include Glu-243 and Cys-277.

The protein belongs to the aldehyde dehydrogenase family. AstD subfamily.

It carries out the reaction N-succinyl-L-glutamate 5-semialdehyde + NAD(+) + H2O = N-succinyl-L-glutamate + NADH + 2 H(+). It participates in amino-acid degradation; L-arginine degradation via AST pathway; L-glutamate and succinate from L-arginine: step 4/5. Functionally, catalyzes the NAD-dependent reduction of succinylglutamate semialdehyde into succinylglutamate. The protein is N-succinylglutamate 5-semialdehyde dehydrogenase of Shewanella sediminis (strain HAW-EB3).